A 267-amino-acid polypeptide reads, in one-letter code: Short chain dehydrogenase claC (267 aa).

4 residues coordinate NADP(+): isoleucine 27, aspartate 73, asparagine 100, and arginine 133. Residues serine 149 and serine 150 each act as proton donor in the active site. Positions 164, 168, and 199 each coordinate NADP(+). The active-site Proton acceptor is tyrosine 164. The Lowers pKa of active site Tyr role is filled by lysine 168.

This sequence belongs to the short-chain dehydrogenases/reductases (SDR) family.

The protein operates within pigment biosynthesis. Its function is as follows. Non-reducing polyketide synthase; part of the gene cluster that mediates the biosynthesis of the bianthraquinone cladofulvin, a conidial pigment not required for virulence but that plays a role in fitness and resistance to environmental stresses including UV light and low-temperature stress. The pathway begins with the synthesis of atrochrysone thioester by the polyketide synthase (PKS) claG. The atrochrysone carboxyl ACP thioesterase claF then breaks the thioester bond and releases the atrochrysone carboxylic acid from claG. This compound is decarboxylated by claH to yield emodin, which is further converted to chrysophanol hydroquinone by the reductase claC and the dehydratase claB. The cytochrome monooxygenase P450 claM then catalyzes the dimerization of nataloe-emodin to cladofulvin. In Passalora fulva (Tomato leaf mold), this protein is Short chain dehydrogenase claC.